The following is a 337-amino-acid chain: Ketol-acid reductoisomerase (NADP(+)) (337 aa).

In terms of domain architecture, KARI N-terminal Rossmann spans 3–183 (VEMFYDDDAD…GGTRAGVIKT (181 aa)). NADP(+)-binding positions include 26 to 29 (YGSQ), lysine 49, serine 52, serine 54, and 84 to 87 (DTAQ). Residue histidine 109 is part of the active site. Glycine 135 serves as a coordination point for NADP(+). The KARI C-terminal knotted domain maps to 184–329 (TFKEETETDL…KKLRDLMSWV (146 aa)). 4 residues coordinate Mg(2+): aspartate 192, glutamate 196, glutamate 228, and glutamate 232. Residue serine 253 participates in substrate binding.

This sequence belongs to the ketol-acid reductoisomerase family. Mg(2+) is required as a cofactor.

It catalyses the reaction (2R)-2,3-dihydroxy-3-methylbutanoate + NADP(+) = (2S)-2-acetolactate + NADPH + H(+). The catalysed reaction is (2R,3R)-2,3-dihydroxy-3-methylpentanoate + NADP(+) = (S)-2-ethyl-2-hydroxy-3-oxobutanoate + NADPH + H(+). Its pathway is amino-acid biosynthesis; L-isoleucine biosynthesis; L-isoleucine from 2-oxobutanoate: step 2/4. The protein operates within amino-acid biosynthesis; L-valine biosynthesis; L-valine from pyruvate: step 2/4. Its function is as follows. Involved in the biosynthesis of branched-chain amino acids (BCAA). Catalyzes an alkyl-migration followed by a ketol-acid reduction of (S)-2-acetolactate (S2AL) to yield (R)-2,3-dihydroxy-isovalerate. In the isomerase reaction, S2AL is rearranged via a Mg-dependent methyl migration to produce 3-hydroxy-3-methyl-2-ketobutyrate (HMKB). In the reductase reaction, this 2-ketoacid undergoes a metal-dependent reduction by NADPH to yield (R)-2,3-dihydroxy-isovalerate. This is Ketol-acid reductoisomerase (NADP(+)) from Rhodococcus jostii (strain RHA1).